We begin with the raw amino-acid sequence, 419 residues long: MINRFSIEKVKGLEIIDSRGNPTIRVFVRTNDGVESFGDAPAGASKGTREAIEVRDENGLTVKRAVDIANYIIDPALHGIDVREQGIIDKILIDIDSTENKSKLGGNTIIATSIAALKTASKALGLEVFKYIAGPRLPKIPIPLLNIINGGLHAGNKLKIQEFIILPIKFNTFKEAFFAAIEVYRNLKGLISERYGKIYTAVGDEGGFSPPLEETREALDLIYTSINNAGYQGKIYMGMDPAASDFYDPKKEKYIIDGKELNPTQLLEFYLDLAKEYPIVYLEDPFEENSFDMFGELQNKLNSTIVIGDDLYTTNIKYLKIGIEKRSTKGVVVKPNQVGTISETFEFTNLARRNSIKLVTSHRSGETEDNFIAEFAVGIESDFIKTGAPARGERTSKYNKLLEIENKFGLEYGGKYFYL.

Residue Q161 coordinates (2R)-2-phosphoglycerate. The Proton donor role is filled by E205. Residues D240, E283, and D309 each contribute to the Mg(2+) site. (2R)-2-phosphoglycerate-binding residues include K334, R363, S364, and K385. K334 acts as the Proton acceptor in catalysis.

The protein belongs to the enolase family. It depends on Mg(2+) as a cofactor.

The protein resides in the cytoplasm. It localises to the secreted. Its subcellular location is the cell surface. The catalysed reaction is (2R)-2-phosphoglycerate = phosphoenolpyruvate + H2O. Its pathway is carbohydrate degradation; glycolysis; pyruvate from D-glyceraldehyde 3-phosphate: step 4/5. Its function is as follows. Catalyzes the reversible conversion of 2-phosphoglycerate (2-PG) into phosphoenolpyruvate (PEP). It is essential for the degradation of carbohydrates via glycolysis. This chain is Enolase, found in Saccharolobus islandicus (strain Y.N.15.51 / Yellowstone #2) (Sulfolobus islandicus).